Reading from the N-terminus, the 396-residue chain is Trypacidin cluster transcription factor (396 aa).

Positions 20–47 form a DNA-binding region, zn(2)-C6 fungal-type; it reads CRACGLSKVRCSKEKPTCSRCRRRGTVC. Disordered regions lie at residues 54–120, 190–218, and 346–365; these read RPGR…LSTV, DPAP…ESEA, and MHGA…PAPL. Positions 57 to 71 are enriched in basic and acidic residues; the sequence is RKPDSRSEVEPEPGH. The span at 72–82 shows a compositional bias: low complexity; the sequence is LSHPLPSPESS.

In terms of tissue distribution, specifically expressed in conidia.

Its subcellular location is the nucleus. Functionally, transcription factor that regulates the expression of the gene clusters that mediate the biosynthesis of trypacidin, a metabolite with antiprotozoal activity and a possible role in the infection process. Trypacidin is toxic for human pulmonary and bronchial epithelial cells by initiating the intracellular formation of nitric oxide (NO) and hydrogen peroxide (H(2)O(2)), thus triggering host necrotic cell death. This chain is Trypacidin cluster transcription factor, found in Aspergillus fumigatus (strain ATCC MYA-4609 / CBS 101355 / FGSC A1100 / Af293) (Neosartorya fumigata).